The following is a 293-amino-acid chain: Formamidopyrimidine-DNA glycosylase (293 aa).

Pro2 functions as the Schiff-base intermediate with DNA in the catalytic mechanism. The active-site Proton donor is the Glu3. Lys58 functions as the Proton donor; for beta-elimination activity in the catalytic mechanism. His104, Arg123, and Lys166 together coordinate DNA. Residues 257–293 (AVYDREGERCRTPGCNGTVKRLVQNGRSTFWCSGCQT) form an FPG-type zinc finger. Residue Arg283 is the Proton donor; for delta-elimination activity of the active site.

Belongs to the FPG family. As to quaternary structure, monomer. Requires Zn(2+) as cofactor.

It carries out the reaction Hydrolysis of DNA containing ring-opened 7-methylguanine residues, releasing 2,6-diamino-4-hydroxy-5-(N-methyl)formamidopyrimidine.. It catalyses the reaction 2'-deoxyribonucleotide-(2'-deoxyribose 5'-phosphate)-2'-deoxyribonucleotide-DNA = a 3'-end 2'-deoxyribonucleotide-(2,3-dehydro-2,3-deoxyribose 5'-phosphate)-DNA + a 5'-end 5'-phospho-2'-deoxyribonucleoside-DNA + H(+). Functionally, involved in base excision repair of DNA damaged by oxidation or by mutagenic agents. Acts as a DNA glycosylase that recognizes and removes damaged bases. Has a preference for oxidized purines, such as 7,8-dihydro-8-oxoguanine (8-oxoG). Has AP (apurinic/apyrimidinic) lyase activity and introduces nicks in the DNA strand. Cleaves the DNA backbone by beta-delta elimination to generate a single-strand break at the site of the removed base with both 3'- and 5'-phosphates. This Rhodopseudomonas palustris (strain HaA2) protein is Formamidopyrimidine-DNA glycosylase.